The following is a 796-amino-acid chain: Lon protease 2 (796 aa).

Positions 9–206 (LPIVILKENV…KLIVNLSIEI (198 aa)) constitute a Lon N-terminal domain. 352–359 (GPPGIGKT) lines the ATP pocket. In terms of domain architecture, Lon proteolytic spans 617–796 (IDSSGFVYGL…EEVFDYLNII (180 aa)). Active-site residues include Ser-702 and Lys-745.

Belongs to the peptidase S16 family. In terms of assembly, homohexamer. Organized in a ring with a central cavity.

The protein resides in the cytoplasm. The enzyme catalyses Hydrolysis of proteins in presence of ATP.. Its function is as follows. ATP-dependent serine protease that mediates the selective degradation of mutant and abnormal proteins as well as certain short-lived regulatory proteins. Required for cellular homeostasis and for survival from DNA damage and developmental changes induced by stress. Degrades polypeptides processively to yield small peptide fragments that are 5 to 10 amino acids long. Binds to DNA in a double-stranded, site-specific manner. The sequence is that of Lon protease 2 (lon2) from Borreliella burgdorferi (strain ATCC 35210 / DSM 4680 / CIP 102532 / B31) (Borrelia burgdorferi).